Reading from the N-terminus, the 450-residue chain is tRNA-2-methylthio-N(6)-dimethylallyladenosine synthase (450 aa).

The MTTase N-terminal domain maps to 8 to 124 (RTLHITTWGC…LPELIAEIEA (117 aa)). 6 residues coordinate [4Fe-4S] cluster: Cys17, Cys52, Cys87, Cys162, Cys166, and Cys169. In terms of domain architecture, Radical SAM core spans 148 to 380 (ASQGPIAFLA…QAVLRDQQHA (233 aa)). The TRAM domain maps to 383–445 (RAQVGRSFEV…PNSLMASLTQ (63 aa)).

Belongs to the methylthiotransferase family. MiaB subfamily. Monomer. Requires [4Fe-4S] cluster as cofactor.

The protein localises to the cytoplasm. It carries out the reaction N(6)-dimethylallyladenosine(37) in tRNA + (sulfur carrier)-SH + AH2 + 2 S-adenosyl-L-methionine = 2-methylsulfanyl-N(6)-dimethylallyladenosine(37) in tRNA + (sulfur carrier)-H + 5'-deoxyadenosine + L-methionine + A + S-adenosyl-L-homocysteine + 2 H(+). In terms of biological role, catalyzes the methylthiolation of N6-(dimethylallyl)adenosine (i(6)A), leading to the formation of 2-methylthio-N6-(dimethylallyl)adenosine (ms(2)i(6)A) at position 37 in tRNAs that read codons beginning with uridine. The chain is tRNA-2-methylthio-N(6)-dimethylallyladenosine synthase from Acidiphilium cryptum (strain JF-5).